The primary structure comprises 473 residues: Double-stranded RNA-binding protein 7 (473 aa).

A compositionally biased stretch (pro residues) spans 1 to 10 (MDMPPTPLPP). The tract at residues 1–22 (MDMPPTPLPPETANTSPAPNGA) is disordered. 2 DRBM domains span residues 33-102 (VFKS…EIVK) and 118-185 (LCKN…AIQG). Composition is skewed to basic and acidic residues over residues 286-307 (KRVE…ENQH), 317-327 (DEARVEQEPSR), and 416-427 (VDARVVKEESPR). Disordered regions lie at residues 286 to 329 (KRVE…SRDI) and 393 to 473 (QLNE…MSEE). The span at 433 to 450 (EATNMKETPKNSAVCNSP) shows a compositional bias: polar residues.

Its function is as follows. Binds double-stranded RNA. This Oryza sativa subsp. japonica (Rice) protein is Double-stranded RNA-binding protein 7 (DRB7).